Here is a 141-residue protein sequence, read N- to C-terminus: Large ribosomal subunit protein uL16 (141 aa).

The protein belongs to the universal ribosomal protein uL16 family. As to quaternary structure, part of the 50S ribosomal subunit.

In terms of biological role, binds 23S rRNA and is also seen to make contacts with the A and possibly P site tRNAs. This chain is Large ribosomal subunit protein uL16, found in Campylobacter hominis (strain ATCC BAA-381 / DSM 21671 / CCUG 45161 / LMG 19568 / NCTC 13146 / CH001A).